An 826-amino-acid polypeptide reads, in one-letter code: Zinc phosphodiesterase ELAC protein 2 (826 aa).

Residues 1-16 (MWALCSLLRSAAGRTM) constitute a mitochondrion transit peptide. Disordered stretches follow at residues 16-51 (MSQG…PSGC) and 188-231 (EQRR…VSQR). The segment covering 27 to 38 (ARRERPRKDPLR) has biased composition (basic and acidic residues). 6 positions are modified to phosphoserine: serine 199, serine 208, serine 212, serine 229, serine 618, and serine 736. Residues 208-224 (SPERSSDSESNENEPHL) show a composition bias toward basic and acidic residues. Residues 798–826 (ELAGGLEDGEPQQKRAHTEEPQAKKVRAQ) are disordered. A compositionally biased stretch (basic and acidic residues) spans 808–820 (PQQKRAHTEEPQA).

It belongs to the RNase Z family. Homodimer. Interacts with PTCD1. The cofactor is Zn(2+).

It localises to the mitochondrion. The protein resides in the mitochondrion matrix. The protein localises to the mitochondrion nucleoid. It is found in the nucleus. The enzyme catalyses Endonucleolytic cleavage of RNA, removing extra 3' nucleotides from tRNA precursor, generating 3' termini of tRNAs. A 3'-hydroxy group is left at the tRNA terminus and a 5'-phosphoryl group is left at the trailer molecule.. Zinc phosphodiesterase, which displays mitochondrial tRNA 3'-processing endonuclease activity. Involved in tRNA maturation, by removing a 3'-trailer from precursor tRNA. Associates with mitochondrial DNA complexes at the nucleoids to initiate RNA processing and ribosome assembly. The protein is Zinc phosphodiesterase ELAC protein 2 (ELAC2) of Pan troglodytes (Chimpanzee).